The chain runs to 132 residues: Small ribosomal subunit protein uS9 (132 aa).

The protein belongs to the universal ribosomal protein uS9 family.

This is Small ribosomal subunit protein uS9 (rps9) from Thermoplasma volcanium (strain ATCC 51530 / DSM 4299 / JCM 9571 / NBRC 15438 / GSS1).